We begin with the raw amino-acid sequence, 731 residues long: DNA ligase (731 aa).

NAD(+) is bound by residues 47–51 (DAEYD), 96–97 (SI), and Glu-133. The active-site N6-AMP-lysine intermediate is Lys-135. Positions 156, 192, 313, and 337 each coordinate NAD(+). Zn(2+) is bound by residues Cys-462, Cys-465, Cys-480, and Cys-486. The region spanning 645 to 731 (AATLPLAGMT…RGTPPNAGGA (87 aa)) is the BRCT domain.

The protein belongs to the NAD-dependent DNA ligase family. LigA subfamily. The cofactor is Mg(2+). Mn(2+) serves as cofactor.

The enzyme catalyses NAD(+) + (deoxyribonucleotide)n-3'-hydroxyl + 5'-phospho-(deoxyribonucleotide)m = (deoxyribonucleotide)n+m + AMP + beta-nicotinamide D-nucleotide.. Functionally, DNA ligase that catalyzes the formation of phosphodiester linkages between 5'-phosphoryl and 3'-hydroxyl groups in double-stranded DNA using NAD as a coenzyme and as the energy source for the reaction. It is essential for DNA replication and repair of damaged DNA. The protein is DNA ligase of Acidovorax sp. (strain JS42).